Here is a 145-residue protein sequence, read N- to C-terminus: Large ribosomal subunit protein uL11 (145 aa).

The protein belongs to the universal ribosomal protein uL11 family. In terms of assembly, part of the ribosomal stalk of the 50S ribosomal subunit. Interacts with L10 and the large rRNA to form the base of the stalk. L10 forms an elongated spine to which L12 dimers bind in a sequential fashion forming a multimeric L10(L12)X complex. In terms of processing, one or more lysine residues are methylated.

Functionally, forms part of the ribosomal stalk which helps the ribosome interact with GTP-bound translation factors. In Francisella philomiragia subsp. philomiragia (strain ATCC 25017 / CCUG 19701 / FSC 153 / O#319-036), this protein is Large ribosomal subunit protein uL11.